Reading from the N-terminus, the 78-residue chain is Beta-defensin 105A (78 aa).

Positions 1-27 (MALIRKTFYFLFAVFFVLVQLPSECQA) are cleaved as a signal peptide. 3 disulfide bridges follow: cysteine 43-cysteine 74, cysteine 53-cysteine 67, and cysteine 57-cysteine 73.

It belongs to the beta-defensin family.

It localises to the secreted. Has antimicrobial activity. The polypeptide is Beta-defensin 105A (DEFB105A) (Pongo pygmaeus (Bornean orangutan)).